Here is a 418-residue protein sequence, read N- to C-terminus: UDP-N-acetylglucosamine 1-carboxyvinyltransferase (418 aa).

Residue 22–23 (KN) coordinates phosphoenolpyruvate. A UDP-N-acetyl-alpha-D-glucosamine-binding site is contributed by arginine 92. The Proton donor role is filled by cysteine 116. Residue cysteine 116 is modified to 2-(S-cysteinyl)pyruvic acid O-phosphothioketal. UDP-N-acetyl-alpha-D-glucosamine contacts are provided by residues 121–125 (RPIDL), aspartate 305, and leucine 327.

It belongs to the EPSP synthase family. MurA subfamily.

It is found in the cytoplasm. It catalyses the reaction phosphoenolpyruvate + UDP-N-acetyl-alpha-D-glucosamine = UDP-N-acetyl-3-O-(1-carboxyvinyl)-alpha-D-glucosamine + phosphate. It functions in the pathway cell wall biogenesis; peptidoglycan biosynthesis. Cell wall formation. Adds enolpyruvyl to UDP-N-acetylglucosamine. This chain is UDP-N-acetylglucosamine 1-carboxyvinyltransferase, found in Campylobacter jejuni subsp. doylei (strain ATCC BAA-1458 / RM4099 / 269.97).